Consider the following 593-residue polypeptide: MLO-like protein 8 (593 aa).

The Extracellular segment spans residues M1 to T46. The helical transmembrane segment at W47–L67 threads the bilayer. Over H68 to E92 the chain is Cytoplasmic. Residues L93 to I113 form a helical membrane-spanning segment. Topologically, residues C114–H181 are extracellular. A helical membrane pass occupies residues I182 to G202. Residues R203–K304 lie on the Cytoplasmic side of the membrane. A helical membrane pass occupies residues V305–I325. Residue D326 is a topological domain, extracellular. The chain crosses the membrane as a helical span at residues G327–T347. Residues K348–H393 are Cytoplasmic-facing. A helical membrane pass occupies residues F394 to G414. The Extracellular portion of the chain corresponds to S415–V430. The helical transmembrane segment at A431–V451 threads the bilayer. Residues T452 to R593 lie on the Cytoplasmic side of the membrane. The segment at E465–A486 is calmodulin-binding. The segment at K481–R593 is disordered. The span at K489 to S512 shows a compositional bias: low complexity. The segment covering L528–N539 has biased composition (acidic residues). Basic and acidic residues predominate over residues T567–S579.

This sequence belongs to the MLO family.

The protein localises to the membrane. Its function is as follows. May be involved in modulation of pathogen defense and leaf cell death. Activity seems to be regulated by Ca(2+)-dependent calmodulin binding and seems not to require heterotrimeric G proteins. In Arabidopsis thaliana (Mouse-ear cress), this protein is MLO-like protein 8 (MLO8).